Reading from the N-terminus, the 620-residue chain is Endoglucanase 10 (620 aa).

The interval 1–26 is disordered; sequence MFGRDPWGGPLEISNADSATDDDRSR. The chain crosses the membrane as a helical; Signal-anchor for type II membrane protein span at residues 72–92; the sequence is IFMWTVGTILGVGLFIGFVMM. The Nucleophile role is filled by D165. N-linked (GlcNAc...) asparagine glycosylation is found at N216, N314, N323, N344, N408, and N425. Residues H513 and D561 contribute to the active site. Residue N567 is glycosylated (N-linked (GlcNAc...) asparagine). E570 is an active-site residue.

This sequence belongs to the glycosyl hydrolase 9 (cellulase E) family. In terms of tissue distribution, ubiquitous.

Its subcellular location is the membrane. The enzyme catalyses Endohydrolysis of (1-&gt;4)-beta-D-glucosidic linkages in cellulose, lichenin and cereal beta-D-glucans.. This Oryza sativa subsp. japonica (Rice) protein is Endoglucanase 10 (GLU2).